A 637-amino-acid chain; its full sequence is Acetolactate synthase 2, chloroplastic (637 aa).

The N-terminal 73 residues, 1-73, are a transit peptide targeting the chloroplast; it reads MASFSFFGTI…SSKYAPNVPR (73 aa). A disordered region spans residues 35-69; that stretch reads RRATRVSVSANSKKDQDRTASRRENPSTFSSKYAP. Positions 46–59 are enriched in basic and acidic residues; it reads SKKDQDRTASRREN. Position 120 (E120) interacts with thiamine diphosphate. FAD is bound by residues R222, 329–350, and 372–391; these read HGTVYANYAVEYSDLLLAFGVR and DIDSTEIGKNKTPHVSVCCD. The thiamine pyrophosphate binding stretch occupies residues 462-542; that stretch reads QHQMWAAQFY…VKVLLINNQH (81 aa). Mg(2+) is bound by residues D513 and N540.

This sequence belongs to the TPP enzyme family. Requires Mg(2+) as cofactor. Thiamine diphosphate is required as a cofactor.

The protein localises to the plastid. It localises to the chloroplast. The catalysed reaction is 2 pyruvate + H(+) = (2S)-2-acetolactate + CO2. Its pathway is amino-acid biosynthesis; L-isoleucine biosynthesis; L-isoleucine from 2-oxobutanoate: step 1/4. It participates in amino-acid biosynthesis; L-valine biosynthesis; L-valine from pyruvate: step 1/4. The protein is Acetolactate synthase 2, chloroplastic of Brassica napus (Rape).